Consider the following 309-residue polypeptide: L-aminoadipate-semialdehyde dehydrogenase-phosphopantetheinyl transferase (309 aa).

CoA contacts are provided by residues Arg47, 86-91 (RTSKGK), and 108-111 (NISH). Mg(2+) is bound by residues Asp129 and Glu181. 181–185 (ESFIK) is a CoA binding site.

The protein belongs to the P-Pant transferase superfamily. AcpS family. Monomer. It depends on Mg(2+) as a cofactor.

The protein resides in the cytoplasm. It is found in the cytosol. It catalyses the reaction apo-[ACP] + CoA = holo-[ACP] + adenosine 3',5'-bisphosphate + H(+). It carries out the reaction apo-[ACP] + acetyl-CoA = acetyl-[ACP] + adenosine 3',5'-bisphosphate + H(+). Functionally, catalyzes the post-translational modification of target proteins by phosphopantetheine. Can transfer the 4'-phosphopantetheine moiety from coenzyme A, regardless of whether the CoA is presented in the free thiol form or as an acetyl thioester, to a serine residue of a broad range of acceptors including the acyl carrier domain of FASN. The chain is L-aminoadipate-semialdehyde dehydrogenase-phosphopantetheinyl transferase (Aasdhppt) from Rattus norvegicus (Rat).